A 352-amino-acid polypeptide reads, in one-letter code: Inhibin beta C chain (352 aa).

The N-terminal stretch at 1–18 is a signal peptide; sequence MTSSLLLAFLLLAPTTVA. Positions 19-236 are excised as a propeptide; that stretch reads TPRAGGQCPA…VGGKHQIHRR (218 aa). 3 N-linked (GlcNAc...) asparagine glycosylation sites follow: N110, N143, and N161. Intrachain disulfides connect C240–C248, C247–C317, C276–C349, and C280–C351.

Belongs to the TGF-beta family. In terms of assembly, homodimeric or heterodimeric through association with alpha and beta subunits, linked by one or more disulfide bonds. Inhibins are heterodimers of one alpha and one beta subunit. Activins are homo- or heterodimers of beta subunits only. In terms of tissue distribution, expressed in benign prostatic hyperplasia.

The protein localises to the secreted. Its function is as follows. Inhibins and activins inhibit and activate, respectively, the secretion of follitropin by the pituitary gland. Inhibins/activins are involved in regulating a number of diverse functions such as hypothalamic and pituitary hormone secretion, gonadal hormone secretion, germ cell development and maturation, erythroid differentiation, insulin secretion, nerve cell survival, embryonic axial development or bone growth, depending on their subunit composition. Inhibins appear to oppose the functions of activins. This Homo sapiens (Human) protein is Inhibin beta C chain (INHBC).